A 168-amino-acid polypeptide reads, in one-letter code: Mesencephalic astrocyte-derived neurotrophic factor homolog (168 aa).

The first 17 residues, 1-17 (MSRLVLLISLVIVVASA), serve as a signal peptide directing secretion. 4 disulfide bridges follow: Cys-22-Cys-109, Cys-25-Cys-97, Cys-55-Cys-66, and Cys-143-Cys-146.

Belongs to the ARMET family. As to expression, expressed in the intestine, spermatheca and nervous system. Expressed in the hypoderm. Expressed in structures of the excretory system. Not expressed in the male gonad.

It is found in the secreted. Its subcellular location is the endoplasmic reticulum lumen. Functionally, inhibits endoplasmic reticulum (ER) stress response. Retained in the ER under normal conditions and is up-regulated and secreted by the ER in response to ER stress and hypoxia. Following secretion by the ER, directly binds to 3-O-sulfogalactosylceramide, a lipid sulfatide in the outer cell membrane of target cells. Sulfatide binding promotes its cellular uptake by endocytosis, and is required for its role in alleviating ER stress under ER stress conditions. Has a neuroprotective role, ensuring survival of dopaminergic neurons during normal growth. This Caenorhabditis elegans protein is Mesencephalic astrocyte-derived neurotrophic factor homolog.